The chain runs to 132 residues: UPF0102 protein Ajs_0414 (132 aa).

Positions 1-23 (MGFLGKKVNGSAPARTTRAAGQA) are disordered.

The protein belongs to the UPF0102 family.

The protein is UPF0102 protein Ajs_0414 of Acidovorax sp. (strain JS42).